Reading from the N-terminus, the 852-residue chain is Lon protease homolog 2, peroxisomal (852 aa).

S2 is modified (N-acetylserine). The 210-residue stretch at 13–222 (LPLLLTHESV…MTIPLLVRQI (210 aa)) folds into the Lon N-terminal domain. Residue 375–382 (GPPGVGKT) participates in ATP binding. The region spanning 651–837 (LSQPGVAIGL…DEVLNAAFDG (187 aa)) is the Lon proteolytic domain. Catalysis depends on residues S743 and K786. The Microbody targeting signal signature appears at 850-852 (SKL).

This sequence belongs to the peptidase S16 family. Interacts with PEX5. Interacts with TYSND1. May interact with enzymes involved in beta-oxidation of fatty acids, including ACOX1/AOX.

Its subcellular location is the peroxisome matrix. The enzyme catalyses Hydrolysis of proteins in presence of ATP.. ATP-dependent serine protease that mediates the selective degradation of misfolded and unassembled polypeptides in the peroxisomal matrix. Necessary for type 2 peroxisome targeting signal (PTS2)-containing protein processing and facilitates peroxisome matrix protein import. May indirectly regulate peroxisomal fatty acid beta-oxidation through degradation of the self-processed forms of TYSND1. The protein is Lon protease homolog 2, peroxisomal (Lonp2) of Rattus norvegicus (Rat).